Consider the following 151-residue polypeptide: 1,4-dihydroxy-2-naphthoyl-CoA hydrolase (151 aa).

Asp-19 is an active-site residue.

It belongs to the 4-hydroxybenzoyl-CoA thioesterase family. DHNA-CoA hydrolase subfamily.

The enzyme catalyses 1,4-dihydroxy-2-naphthoyl-CoA + H2O = 1,4-dihydroxy-2-naphthoate + CoA + H(+). The protein operates within cofactor biosynthesis; phylloquinone biosynthesis. It functions in the pathway quinol/quinone metabolism; 1,4-dihydroxy-2-naphthoate biosynthesis; 1,4-dihydroxy-2-naphthoate from chorismate: step 7/7. Functionally, catalyzes the hydrolysis of 1,4-dihydroxy-2-naphthoyl-CoA (DHNA-CoA) to 1,4-dihydroxy-2-naphthoate (DHNA), a reaction involved in phylloquinone (vitamin K1) biosynthesis. The protein is 1,4-dihydroxy-2-naphthoyl-CoA hydrolase of Prochlorococcus marinus (strain MIT 9313).